Reading from the N-terminus, the 79-residue chain is Conotoxin VnMSGL-0122 (79 aa).

An N-terminal signal peptide occupies residues 1–20 (MSGLGIMVLALLLLVFMATS). The propeptide occupies 21–44 (HQDGGGKQATQRDAINVRRRRSIT). 3 cysteine pairs are disulfide-bonded: Cys-52-Cys-64, Cys-56-Cys-73, and Cys-63-Cys-77. Leucine amide is present on Leu-78.

Belongs to the conotoxin O3 superfamily. In terms of tissue distribution, expressed by the venom duct.

Its subcellular location is the secreted. In Conus ventricosus (Mediterranean cone), this protein is Conotoxin VnMSGL-0122.